Consider the following 346-residue polypeptide: [LysW]-lysine/[LysW]-ornithine hydrolase (346 aa).

H68 contacts Zn(2+). The active site involves D70. Zn(2+) is bound at residue D92. E122 serves as the catalytic Proton acceptor. Zn(2+) contacts are provided by E123, E146, and H317.

This sequence belongs to the peptidase M20A family. LysK subfamily. Zn(2+) serves as cofactor. It depends on Co(2+) as a cofactor.

It localises to the cytoplasm. The catalysed reaction is [amino-group carrier protein]-C-terminal-gamma-(L-lysyl)-L-glutamate + H2O = [amino-group carrier protein]-C-terminal-L-glutamate + L-lysine. It carries out the reaction [amino-group carrier protein]-C-terminal-gamma-(L-ornithyl)-L-glutamate + H2O = [amino-group carrier protein]-C-terminal-L-glutamate + L-ornithine. Its pathway is amino-acid biosynthesis; L-lysine biosynthesis via AAA pathway; L-lysine from L-alpha-aminoadipate (Thermus route): step 5/5. The protein operates within amino-acid biosynthesis; L-arginine biosynthesis. In terms of biological role, catalyzes the release of L-lysine from [LysW]-gamma-L-lysine and the release of L-ornithine from [LysW]-L-ornithine. The polypeptide is [LysW]-lysine/[LysW]-ornithine hydrolase (Saccharolobus solfataricus (strain ATCC 35092 / DSM 1617 / JCM 11322 / P2) (Sulfolobus solfataricus)).